The sequence spans 277 residues: 3-methyl-2-oxobutanoate hydroxymethyltransferase (277 aa).

Mg(2+) is bound by residues D43 and D82. Residues 43–44 (DS), D82, and K112 contribute to the 3-methyl-2-oxobutanoate site. Residue E114 coordinates Mg(2+). The active-site Proton acceptor is the E181.

It belongs to the PanB family. Homodecamer; pentamer of dimers. Mg(2+) is required as a cofactor.

The protein resides in the cytoplasm. The catalysed reaction is 3-methyl-2-oxobutanoate + (6R)-5,10-methylene-5,6,7,8-tetrahydrofolate + H2O = 2-dehydropantoate + (6S)-5,6,7,8-tetrahydrofolate. Its pathway is cofactor biosynthesis; (R)-pantothenate biosynthesis; (R)-pantoate from 3-methyl-2-oxobutanoate: step 1/2. Catalyzes the reversible reaction in which hydroxymethyl group from 5,10-methylenetetrahydrofolate is transferred onto alpha-ketoisovalerate to form ketopantoate. This chain is 3-methyl-2-oxobutanoate hydroxymethyltransferase, found in Listeria monocytogenes serovar 1/2a (strain ATCC BAA-679 / EGD-e).